We begin with the raw amino-acid sequence, 249 residues long: Triosephosphate isomerase (249 aa).

8–10 (NWK) is a substrate binding site. Histidine 95 acts as the Electrophile in catalysis. Glutamate 163 serves as the catalytic Proton acceptor. Substrate is bound by residues glycine 169 and serine 209.

It belongs to the triosephosphate isomerase family. Homodimer.

It is found in the cytoplasm. It carries out the reaction D-glyceraldehyde 3-phosphate = dihydroxyacetone phosphate. The protein operates within carbohydrate biosynthesis; gluconeogenesis. It participates in carbohydrate degradation; glycolysis; D-glyceraldehyde 3-phosphate from glycerone phosphate: step 1/1. Its function is as follows. Involved in the gluconeogenesis. Catalyzes stereospecifically the conversion of dihydroxyacetone phosphate (DHAP) to D-glyceraldehyde-3-phosphate (G3P). The chain is Triosephosphate isomerase from Orientia tsutsugamushi (strain Boryong) (Rickettsia tsutsugamushi).